The sequence spans 318 residues: Probable carboxylesterase 1 (318 aa).

An N-acetylmethionine modification is found at Met1. The short motif at 79–81 is the Involved in the stabilization of the negatively charged intermediate by the formation of the oxyanion hole element; that stretch reads HGG. Catalysis depends on residues Ser163, Asp258, and His290.

It belongs to the 'GDXG' lipolytic enzyme family. Expressed in roots, stems, flowers and siliques.

The enzyme catalyses a carboxylic ester + H2O = an alcohol + a carboxylate + H(+). In terms of biological role, carboxylesterase acting on esters with varying acyl chain length. This chain is Probable carboxylesterase 1 (CXE1), found in Arabidopsis thaliana (Mouse-ear cress).